Here is a 432-residue protein sequence, read N- to C-terminus: Trigger factor (432 aa).

One can recognise a PPIase FKBP-type domain in the interval 161-246; the sequence is EDRVTIDFTG…LKKVEERELP (86 aa).

The protein belongs to the FKBP-type PPIase family. Tig subfamily.

The protein resides in the cytoplasm. It catalyses the reaction [protein]-peptidylproline (omega=180) = [protein]-peptidylproline (omega=0). In terms of biological role, involved in protein export. Acts as a chaperone by maintaining the newly synthesized protein in an open conformation. Functions as a peptidyl-prolyl cis-trans isomerase. In Citrobacter koseri (strain ATCC BAA-895 / CDC 4225-83 / SGSC4696), this protein is Trigger factor.